A 332-amino-acid polypeptide reads, in one-letter code: UPF0194 membrane protein YbhG (332 aa).

A signal peptide spans 1-16; sequence MMKKPVVIGLAVVVLA. A coiled-coil region spans residues 108-209; the sequence is EEIAQAAAAV…LNLQDSTLIA (102 aa).

The protein belongs to the UPF0194 family.

It is found in the periplasm. This chain is UPF0194 membrane protein YbhG, found in Escherichia coli O127:H6 (strain E2348/69 / EPEC).